We begin with the raw amino-acid sequence, 223 residues long: Agamous-like MADS-box protein AGL11 (223 aa).

The MADS-box domain occupies 1 to 61 (MGRGKIEIKR…GRVYEYSNNN (61 aa)). The region spanning 87-177 (AQYYQQESAK…RTKIAEVERL (91 aa)) is the K-box domain.

In terms of tissue distribution, expressed in flowers and seeds. Expressed in endotesta cell layer of developing seeds.

It is found in the nucleus. Its function is as follows. Probable transcription factor involved in seed development. Plays a role in seed morphogenesis by promoting the correct development of endotesta cell layer, which directs the further development of the seed coat, the endosperm, and consequently the embryo. This Vitis vinifera (Grape) protein is Agamous-like MADS-box protein AGL11.